The chain runs to 459 residues: Vacuolar cation/proton exchanger 3 (459 aa).

Residues 1 to 67 (MGSIVEPWAA…TLKNILSNLQ (67 aa)) lie on the Cytoplasmic side of the membrane. A helical membrane pass occupies residues 68–88 (EVILGTKLTLLFLAIPLAILA). At 89–95 (NSYNYGR) the chain is on the extracellular side. Residues 96–116 (PLIFGLSLIGLTPLAERVSFL) traverse the membrane as a helical segment. The Cytoplasmic portion of the chain corresponds to 117–129 (TEQLAFYTGPTVG). Residues 130–150 (GLLNATCGNATELIIAILALA) traverse the membrane as a helical segment. Positions 137-172 (GNATELIIAILALANNKVAVVKYSLLGSILSNLLLV) are cation selection. Topologically, residues 151 to 161 (NNKVAVVKYSL) are extracellular. Residues 162–182 (LGSILSNLLLVLGTSLFFGGI) traverse the membrane as a helical segment. Over 183-195 (ANIRREQRFDRKQ) the chain is Cytoplasmic. The chain crosses the membrane as a helical span at residues 196–216 (ADVNFFLLLMGLLCHLLPLLL). Topologically, residues 217 to 238 (KYAATGEVSTSMINKMSLTLSR) are extracellular. Residues 239-259 (TSSIVMLIAYIAYLIFQLWTH) form a helical membrane-spanning segment. Residues 260–283 (RQLFEAQQDDDDAYDDEVSVEETP) are Cytoplasmic-facing. A helical membrane pass occupies residues 284 to 304 (VIGFWSGFAWLVGMTIVIALL). Topologically, residues 305–327 (SEYVVDTIEDASDSWGLSVSFIS) are extracellular. A helical transmembrane segment spans residues 328-348 (IILLPIVGNAAEHAGAIIFAF). The tract at residues 335–370 (GNAAEHAGAIIFAFKNKLDISLGVALGSATQISLFV) is cation selection. At 349 to 362 (KNKLDISLGVALGS) the chain is on the cytoplasmic side. Residues 363-383 (ATQISLFVVPLSVIVAWILGI) form a helical membrane-spanning segment. The Extracellular portion of the chain corresponds to 384-386 (KMD). A helical transmembrane segment spans residues 387-407 (LNFNILETSSLALAIIITAFT). At 408 to 417 (LQDGTSHYMK) the chain is on the cytoplasmic side. The helical transmembrane segment at 418-438 (GLVLLLCYVIIAACFFVDQIP) threads the bilayer. The Extracellular segment spans residues 439–459 (QPNDLDVGLQPMNNLGEVFSA).

The protein belongs to the Ca(2+):cation antiporter (CaCA) (TC 2.A.19) family. Cation/proton exchanger (CAX) subfamily. In terms of tissue distribution, expressed in roots, stems and flowers.

It is found in the vacuole membrane. Inhibited by excess of Ca(2+). In terms of biological role, vacuolar cation/proton exchanger (CAX). Translocates Ca(2+) and other metal ions into vacuoles using the proton gradient formed by H(+)-ATPase and H(+)-pyrophosphatase. Involved in ion homeostasis in association with CAX1. This chain is Vacuolar cation/proton exchanger 3 (CAX3), found in Arabidopsis thaliana (Mouse-ear cress).